The chain runs to 286 residues: uncharacterized protein (286 aa).

Residues 1 to 47 (MAIPFLHKGGSDDSTHHHTHDYDHHNHDHHGHDHHSHDSSSNSSSEA) form a disordered region. Residues 9–26 (GGSDDSTHHHTHDYDHHN) show a composition bias toward basic and acidic residues. 93 to 100 (GPVGSGKT) lines the GTP pocket.

The protein belongs to the SIMIBI class G3E GTPase family. UreG subfamily.

The protein resides in the cytoplasm. Its subcellular location is the nucleus. In terms of biological role, probably facilitates nickel incorporation. This is an uncharacterized protein from Schizosaccharomyces pombe (strain 972 / ATCC 24843) (Fission yeast).